A 205-amino-acid chain; its full sequence is MSKRESAKYKIDRRLGENIWGRPKSPVNKREYGPGQHGQRRKGKLSDFGLQLRAKQKLKGHYGDVSEKQFRKVYEEADRRKGDTSENLIGLLESRLDAVVYRAKFVPTIFAARQFVNHGHVNVNGKRVNIGSYRCKPGDVIEVREKSKQLVIVLESVGLAERDVPDYIEADHNKMVATFSRIPGLADVPFAVQMEPNLVVEFYSR.

The tract at residues glutamate 17–serine 46 is disordered. Positions serine 94 to valine 157 constitute an S4 RNA-binding domain.

This sequence belongs to the universal ribosomal protein uS4 family. As to quaternary structure, part of the 30S ribosomal subunit. Contacts protein S5. The interaction surface between S4 and S5 is involved in control of translational fidelity.

Functionally, one of the primary rRNA binding proteins, it binds directly to 16S rRNA where it nucleates assembly of the body of the 30S subunit. Its function is as follows. With S5 and S12 plays an important role in translational accuracy. The protein is Small ribosomal subunit protein uS4 of Mesorhizobium japonicum (strain LMG 29417 / CECT 9101 / MAFF 303099) (Mesorhizobium loti (strain MAFF 303099)).